The primary structure comprises 272 residues: Ribosomal RNA small subunit methyltransferase A (272 aa).

S-adenosyl-L-methionine is bound by residues asparagine 18, leucine 20, glycine 45, glutamate 66, aspartate 91, and asparagine 113.

Belongs to the class I-like SAM-binding methyltransferase superfamily. rRNA adenine N(6)-methyltransferase family. RsmA subfamily.

It localises to the cytoplasm. The enzyme catalyses adenosine(1518)/adenosine(1519) in 16S rRNA + 4 S-adenosyl-L-methionine = N(6)-dimethyladenosine(1518)/N(6)-dimethyladenosine(1519) in 16S rRNA + 4 S-adenosyl-L-homocysteine + 4 H(+). Functionally, specifically dimethylates two adjacent adenosines (A1518 and A1519) in the loop of a conserved hairpin near the 3'-end of 16S rRNA in the 30S particle. May play a critical role in biogenesis of 30S subunits. This Serratia proteamaculans (strain 568) protein is Ribosomal RNA small subunit methyltransferase A.